The following is a 210-amino-acid chain: Orotate phosphoribosyltransferase (210 aa).

5-phospho-alpha-D-ribose 1-diphosphate contacts are provided by residues R94, K98, H100, and 120 to 128 (EDLISTGGS). Residue S124 participates in orotate binding.

This sequence belongs to the purine/pyrimidine phosphoribosyltransferase family. PyrE subfamily. In terms of assembly, homodimer. Mg(2+) is required as a cofactor.

It carries out the reaction orotidine 5'-phosphate + diphosphate = orotate + 5-phospho-alpha-D-ribose 1-diphosphate. It functions in the pathway pyrimidine metabolism; UMP biosynthesis via de novo pathway; UMP from orotate: step 1/2. In terms of biological role, catalyzes the transfer of a ribosyl phosphate group from 5-phosphoribose 1-diphosphate to orotate, leading to the formation of orotidine monophosphate (OMP). This chain is Orotate phosphoribosyltransferase, found in Bacillus cereus (strain ATCC 10987 / NRS 248).